The primary structure comprises 503 residues: Probable protein kinase UbiB (503 aa).

A helical transmembrane segment spans residues 13–35 (TFYRYRLAGLCASLMGSGWICAL). Positions 120-491 (EFETEPIASA…QQRQSLWLAV (372 aa)) constitute a Protein kinase domain. Residues 126-134 (IASASIAQV) and K148 contribute to the ATP site. Residue D283 is the Proton acceptor of the active site. A helical membrane pass occupies residues 485–502 (QSLWLAVIAVVLLLILLL).

It belongs to the ABC1 family. UbiB subfamily.

It localises to the cell inner membrane. Its pathway is cofactor biosynthesis; ubiquinone biosynthesis [regulation]. In terms of biological role, is probably a protein kinase regulator of UbiI activity which is involved in aerobic coenzyme Q (ubiquinone) biosynthesis. The chain is Probable protein kinase UbiB from Neisseria meningitidis serogroup B (strain ATCC BAA-335 / MC58).